A 200-amino-acid polypeptide reads, in one-letter code: Holliday junction branch migration complex subunit RuvA (200 aa).

Residues 1–64 (MIGHLRGIIV…EDAHTLYGFH (64 aa)) are domain I. Residues 65–143 (NDHERRLFRA…RWHTNDTPSP (79 aa)) form a domain II region. The segment at 144 to 148 (EGLRS) is flexible linker. The domain III stretch occupies residues 149–200 (SNTQPTQDAISALMALGYKPQEAKRAIDAIQKPDLSAETLIRLALKQMVLGT).

It belongs to the RuvA family. Homotetramer. Forms an RuvA(8)-RuvB(12)-Holliday junction (HJ) complex. HJ DNA is sandwiched between 2 RuvA tetramers; dsDNA enters through RuvA and exits via RuvB. An RuvB hexamer assembles on each DNA strand where it exits the tetramer. Each RuvB hexamer is contacted by two RuvA subunits (via domain III) on 2 adjacent RuvB subunits; this complex drives branch migration. In the full resolvosome a probable DNA-RuvA(4)-RuvB(12)-RuvC(2) complex forms which resolves the HJ.

It localises to the cytoplasm. Functionally, the RuvA-RuvB-RuvC complex processes Holliday junction (HJ) DNA during genetic recombination and DNA repair, while the RuvA-RuvB complex plays an important role in the rescue of blocked DNA replication forks via replication fork reversal (RFR). RuvA specifically binds to HJ cruciform DNA, conferring on it an open structure. The RuvB hexamer acts as an ATP-dependent pump, pulling dsDNA into and through the RuvAB complex. HJ branch migration allows RuvC to scan DNA until it finds its consensus sequence, where it cleaves and resolves the cruciform DNA. This chain is Holliday junction branch migration complex subunit RuvA, found in Coxiella burnetii (strain CbuG_Q212) (Coxiella burnetii (strain Q212)).